The chain runs to 177 residues: Bifunctional protein PyrR (177 aa).

The PRPP-binding motif lies at 98 to 110 (IILVDDVIYTGRT).

It belongs to the purine/pyrimidine phosphoribosyltransferase family. PyrR subfamily. Homodimer and homohexamer; in equilibrium.

The catalysed reaction is UMP + diphosphate = 5-phospho-alpha-D-ribose 1-diphosphate + uracil. Functionally, regulates transcriptional attenuation of the pyrimidine nucleotide (pyr) operon by binding in a uridine-dependent manner to specific sites on pyr mRNA. This disrupts an antiterminator hairpin in the RNA and favors formation of a downstream transcription terminator, leading to a reduced expression of downstream genes. Its function is as follows. Also displays a weak uracil phosphoribosyltransferase activity which is not physiologically significant. The protein is Bifunctional protein PyrR of Clostridium kluyveri (strain ATCC 8527 / DSM 555 / NBRC 12016 / NCIMB 10680 / K1).